The primary structure comprises 519 residues: bZIP transcription factor 30 (519 aa).

Disordered regions lie at residues 1–30 (MGGGGDTTDTNMMQRVNSSSGTSSSSIPKH), 45–83 (FRHPFTGAPPPPIPPISPYSQIPATLQPRHSRSMSQPSS), 108–202 (TGAG…RKPE), 222–295 (VLNS…TGRH), and 315–339 (SSLKLPPSSSAKVSPTNSGEGNSSA). Residues 51–61 (GAPPPPIPPIS) show a composition bias toward pro residues. Over residues 149–173 (SDVTFGFSSMMSQNQKSPPLSSLER) the composition is skewed to polar residues. The span at 187–202 (VKKEPREGFYKGRKPE) shows a compositional bias: basic and acidic residues. Composition is skewed to low complexity over residues 244-268 (SRGSGTKKTNGGSSSDSEGDSSASG) and 317-329 (LKLPPSSSAKVSP). Residues 330–339 (TNSGEGNSSA) are compositionally biased toward polar residues. A basic motif region spans residues 372 to 393 (KRVKRILANRVSAARSKERKTR). A coiled-coil region spans residues 386 to 460 (RSKERKTRYM…SEKLNEEVQR (75 aa)). The tract at residues 398–433 (LEHKVQTLQTEATTLSAQLTHLQRDSMGLTNQNSEL) is leucine-zipper. Positions 465–519 (IGEPNRRQSGSSSSESKMSLNPEMFQQLSISQLQHQQMQHSNQCSTMKAKHTSND) are disordered. Composition is skewed to low complexity over residues 473 to 483 (SGSSSSESKMS) and 490 to 509 (QQLSISQLQHQQMQHSNQCS).

Interacts with WUS, HEC1, KNAT1, KNAT2, HAT1, BEL1, and NGA1. In terms of tissue distribution, expressed in inflorescence meristem, floral organ primordia, gynoecia, ovules and carpel margin meristem.

Its subcellular location is the nucleus. Transcription factor that acts as a repressor of reproductive development, meristem size and plant growth. Acts as a transcriptional repressor in inflorescence tissues. Interacts with well known regulators of meristem and gynoecium development such as WUS, HEC1, KNAT1, KNAT2, HAT1, BEL1 and NGA1. Acts as a positive regulator of JAG and OFP1 expression in developing gynoecia. In Arabidopsis thaliana (Mouse-ear cress), this protein is bZIP transcription factor 30.